A 518-amino-acid chain; its full sequence is Glutamate--cysteine ligase (518 aa).

Belongs to the glutamate--cysteine ligase type 1 family. Type 1 subfamily.

The enzyme catalyses L-cysteine + L-glutamate + ATP = gamma-L-glutamyl-L-cysteine + ADP + phosphate + H(+). It participates in sulfur metabolism; glutathione biosynthesis; glutathione from L-cysteine and L-glutamate: step 1/2. The chain is Glutamate--cysteine ligase from Escherichia coli O139:H28 (strain E24377A / ETEC).